Here is a 155-residue protein sequence, read N- to C-terminus: Protein SREK1IP1 (155 aa).

The segment at 13–30 adopts a CCHC-type zinc-finger fold; the sequence is AGCKKCGYPGHLTFECRN. Positions 43–155 are disordered; that stretch reads DVSSTSTEDS…SSSSQSSSSD (113 aa). Positions 58-74 are enriched in basic and acidic residues; it reads EVARAPADKKNVTDTGK. Residues 75-93 are compositionally biased toward basic residues; it reads KKLKRKKEKKLKKHRKRLH. Residues 94–103 show a composition bias toward basic and acidic residues; it reads SSSESDDNSK. Over residues 104–137 the composition is skewed to basic residues; the sequence is AKKRKSQKKEKRVKHKAKKGKQHKKDKRKEKRER. Positions 140–155 are enriched in low complexity; that stretch reads SSSSSSSSSSQSSSSD.

Functionally, possible splicing regulator involved in the control of cellular survival. The polypeptide is Protein SREK1IP1 (srek1ip1) (Xenopus tropicalis (Western clawed frog)).